Here is a 461-residue protein sequence, read N- to C-terminus: Peptidyl-prolyl cis-trans isomerase-like 4 (461 aa).

The 171-residue stretch at 1-171 folds into the PPIase cyclophilin-type domain; the sequence is MSVLLETSLG…KDIRIRHTVI (171 aa). Residues 248 to 326 form the RRM domain; that stretch reads NVLFVCKLNP…HRIHVDFSQS (79 aa). The interval 372–461 is disordered; that stretch reads NYNMVFDKND…DDRYRDRRRR (90 aa). 2 stretches are compositionally biased toward basic and acidic residues: residues 378-392 and 400-461; these read DKNDNRRSAPRERSY and NYRD…RRRR.

It belongs to the cyclophilin-type PPIase family. PPIL4 subfamily.

It localises to the nucleus. The catalysed reaction is [protein]-peptidylproline (omega=180) = [protein]-peptidylproline (omega=0). Its function is as follows. PPIases accelerate the folding of proteins. It catalyzes the cis-trans isomerization of proline imidic peptide bonds in oligopeptides. This Emericella nidulans (strain FGSC A4 / ATCC 38163 / CBS 112.46 / NRRL 194 / M139) (Aspergillus nidulans) protein is Peptidyl-prolyl cis-trans isomerase-like 4 (cyp6).